Consider the following 300-residue polypeptide: GTPase Era (300 aa).

Positions 8 to 176 (RCGYVAIVGR…EGLIAKHLPE (169 aa)) constitute an Era-type G domain. Positions 16 to 23 (GRPNVGKS) are G1. 16 to 23 (GRPNVGKS) contributes to the GTP binding site. The tract at residues 42–46 (QTTRH) is G2. A G3 region spans residues 63–66 (DTPG). GTP-binding positions include 63–67 (DTPGM) and 125–128 (NKTD). The G4 stretch occupies residues 125 to 128 (NKTD). The tract at residues 155 to 157 (VSA) is G5. In terms of domain architecture, KH type-2 spans 199-283 (VREKIMRQLG…MLNLWVKVKG (85 aa)).

The protein belongs to the TRAFAC class TrmE-Era-EngA-EngB-Septin-like GTPase superfamily. Era GTPase family. As to quaternary structure, monomer.

The protein resides in the cytoplasm. The protein localises to the cell inner membrane. In terms of biological role, an essential GTPase that binds both GDP and GTP, with rapid nucleotide exchange. Plays a role in 16S rRNA processing and 30S ribosomal subunit biogenesis and possibly also in cell cycle regulation and energy metabolism. This is GTPase Era from Pseudomonas fluorescens (strain ATCC BAA-477 / NRRL B-23932 / Pf-5).